Here is a 253-residue protein sequence, read N- to C-terminus: Hydroxyacylglutathione hydrolase (253 aa).

Residues His-54, His-56, Asp-58, His-59, His-112, Asp-131, and His-169 each contribute to the Zn(2+) site.

It belongs to the metallo-beta-lactamase superfamily. Glyoxalase II family. As to quaternary structure, monomer. Zn(2+) serves as cofactor.

The catalysed reaction is an S-(2-hydroxyacyl)glutathione + H2O = a 2-hydroxy carboxylate + glutathione + H(+). Its pathway is secondary metabolite metabolism; methylglyoxal degradation; (R)-lactate from methylglyoxal: step 2/2. In terms of biological role, thiolesterase that catalyzes the hydrolysis of S-D-lactoyl-glutathione to form glutathione and D-lactic acid. This chain is Hydroxyacylglutathione hydrolase, found in Bartonella quintana (strain Toulouse) (Rochalimaea quintana).